The following is a 143-amino-acid chain: Nucleoside diphosphate kinase (143 aa).

Lys-11, Phe-59, Arg-87, Thr-93, Arg-104, and Asn-114 together coordinate ATP. The Pros-phosphohistidine intermediate role is filled by His-117.

Belongs to the NDK family. In terms of assembly, homotetramer. Mg(2+) is required as a cofactor.

It localises to the cytoplasm. It catalyses the reaction a 2'-deoxyribonucleoside 5'-diphosphate + ATP = a 2'-deoxyribonucleoside 5'-triphosphate + ADP. It carries out the reaction a ribonucleoside 5'-diphosphate + ATP = a ribonucleoside 5'-triphosphate + ADP. Major role in the synthesis of nucleoside triphosphates other than ATP. The ATP gamma phosphate is transferred to the NDP beta phosphate via a ping-pong mechanism, using a phosphorylated active-site intermediate. This is Nucleoside diphosphate kinase from Salmonella agona (strain SL483).